A 1053-amino-acid polypeptide reads, in one-letter code: Serine/threonine-protein phosphatase 6 regulatory ankyrin repeat subunit A (1053 aa).

ANK repeat units lie at residues 40–69 (EKRTPLHAAAYLGDAEIIELLILSGARVNA), 73–102 (KWLTPLHRAVASCSEEAVQILLKHSADVNA), 106–135 (NWQTPLHIAAANKAVKCAESLVPLLSNVNV), 139–168 (AGRTALHHAAFSGHGEMVKLLLSRGANINA), 172–201 (KDRRAIHWAAYMGHIEVVKLLVSHGAEVTC), 205–234 (KSYTPLHAAASSGMISVVKYLLDLGVDMNE), 238–267 (YGNTPLHVACYNGQDVVVNELIDCGANVNQ), 271–301 (KGFTPLHFAAASTHGALCLELLVGNGADVNM), 305–334 (DGKTPLHMTALHGRFSRSQTIIQSGAVIDC), 338–367 (NGNTPLHIAARYGHELLINTLITSGADTAK), 371–400 (HGMFPLHLAALSGFSDCCRKLLSSGFDIDT), 404–433 (FGRTCLHAAAAGGNLECLNLLLNTGADFNK), 437–466 (FGRSPLHYAAANCNYQCLFALVGSGASVND), 470–500 (RGCTPLHYAATSDTDGKCLEYLLRNDANPGI), 504–534 (QGYNAVHYSAAYGHRLCLQLIASETPLDVLM), 549–578 (ATISPLHLAAYHGHHQALEVLVQSLLDLDV), 582–611 (SGRTPLDLAAFKGHVECVDVLINQGASILV), 616–645 (LKRTPIHAAATNGHSECLRLLIGNAEPQNA), 652–681 (NGQTPLMLSVLNGHTDCVYSLLNKGANVDA), 685–714 (WGRTALHRGAVTGHEECVDALLQHGAKCLL), 718–747 (RGRTPIHLSAACGHIGVLGALLQSATSVDA), 755–786 (HGYTALHWACYNGHETCVELLLEQDVFQKIDG), 788–817 (AFSPLHCAVINDNEGAAEMLIDSLGASIVN), 822–851 (KGRTPLHAAAFTDHVECLQLLLSQNAQVNS), 855–885 (TGKTPLMMAAENGQTNTVEMLVSSASADLTL), 889–918 (SKNTALHLACGKGHETSALLILEKITDRNL), and 925–954 (ALQTPLHVAARNGLTMVVQELLGKGASVLA). Phosphoserine is present on residues Ser1007 and Ser1011.

As to quaternary structure, protein phosphatase 6 (PP6) holoenzyme is proposed to be a heterotrimeric complex formed by the catalytic subunit, a SAPS domain-containing subunit (PP6R) and an ankyrin repeat-domain containing regulatory subunit (ARS). Interacts with PPP1C and HNRPK. Interacts with PPP6C, PPP6R1 and PPP6R3. Ubiquitinated by the ECS(RAB40C) complex leading to its degradation and decreased PP6 activity. Widely expressed (at protein level).

Its subcellular location is the nucleus. It localises to the nucleoplasm. The protein localises to the cytoplasm. It is found in the cytosol. The protein resides in the cell projection. Its subcellular location is the lamellipodium. Putative regulatory subunit of protein phosphatase 6 (PP6) that may be involved in the recognition of phosphoprotein substrates. Involved in the PP6-mediated dephosphorylation of NFKBIE opposing its degradation in response to TNF-alpha. Selectively inhibits the phosphatase activity of PPP1C. Targets PPP1C to modulate HNRPK phosphorylation. Involved in the PP6-mediated dephosphorylation of MOB1 and induced focal adhesion assembly during cell migration. The protein is Serine/threonine-protein phosphatase 6 regulatory ankyrin repeat subunit A (Ankrd28) of Mus musculus (Mouse).